The following is a 49-amino-acid chain: Large ribosomal subunit protein bL33 (49 aa).

The disordered stretch occupies residues isoleucine 18–lysine 49. The span at asparagine 25 to lysine 34 shows a compositional bias: basic and acidic residues.

It belongs to the bacterial ribosomal protein bL33 family.

The polypeptide is Large ribosomal subunit protein bL33 (Lysinibacillus sphaericus (strain C3-41)).